A 222-amino-acid polypeptide reads, in one-letter code: 26S proteasome non-ATPase regulatory subunit 9 (222 aa).

Residues 108 to 194 form the PDZ domain; it reads QARDMAEARE…KPLNVMVIRR (87 aa). Position 128 is a phosphoserine (serine 128).

The protein belongs to the proteasome subunit p27 family. Interacts with PSMC3. Part of a transient complex (modulator) containing PSMD9, PSMC6 and PSMC3 formed during the assembly of the 26S proteasome.

Functionally, acts as a chaperone during the assembly of the 26S proteasome, specifically of the base subcomplex of the PA700/19S regulatory complex (RC). During the base subcomplex assembly is part of an intermediate PSMD9:PSMC6:PSMC3 module, also known as modulator trimer complex; PSMD9 is released during the further base assembly process. The chain is 26S proteasome non-ATPase regulatory subunit 9 (Psmd9) from Rattus norvegicus (Rat).